Reading from the N-terminus, the 404-residue chain is Cysteine desulfurase IscS (404 aa).

Pyridoxal 5'-phosphate is bound by residues 75–76 (AT), Asn155, Gln183, and 203–205 (SGH). Lys206 is subject to N6-(pyridoxal phosphate)lysine. Residue Thr243 participates in pyridoxal 5'-phosphate binding. Cys328 (cysteine persulfide intermediate) is an active-site residue. Residue Cys328 coordinates [2Fe-2S] cluster.

This sequence belongs to the class-V pyridoxal-phosphate-dependent aminotransferase family. NifS/IscS subfamily. As to quaternary structure, homodimer. Forms a heterotetramer with IscU, interacts with other sulfur acceptors. Pyridoxal 5'-phosphate serves as cofactor.

It localises to the cytoplasm. It catalyses the reaction (sulfur carrier)-H + L-cysteine = (sulfur carrier)-SH + L-alanine. Its pathway is cofactor biosynthesis; iron-sulfur cluster biosynthesis. Its function is as follows. Master enzyme that delivers sulfur to a number of partners involved in Fe-S cluster assembly, tRNA modification or cofactor biosynthesis. Catalyzes the removal of elemental sulfur atoms from cysteine to produce alanine. Functions as a sulfur delivery protein for Fe-S cluster synthesis onto IscU, an Fe-S scaffold assembly protein, as well as other S acceptor proteins. The sequence is that of Cysteine desulfurase IscS from Shewanella sp. (strain MR-4).